The sequence spans 1644 residues: Kinesin-like protein unc-104 (1644 aa).

The 349-residue stretch at 3-351 folds into the Kinesin motor domain; that stretch reads SVKVAVRVRP…LRYADRAKQI (349 aa). 97-104 lines the ATP pocket; that stretch reads GQTGAGKS. The stretch at 358 to 436 forms a coiled coil; the sequence is NEDANAKLIR…IAELNETWEE (79 aa). In terms of domain architecture, FHA spans 499 to 565; sequence TRLGTSEANV…LQTGSRVILG (67 aa). Residues 574 to 591 are compositionally biased toward basic and acidic residues; it reads HPEQAREKREKPKDKDVG. The disordered stretch occupies residues 574–598; it reads HPEQAREKREKPKDKDVGENPGGNA. Residues 631 to 672 adopt a coiled-coil conformation; it reads EQFKREKLAADQEFEEQRKTYEARIDALQKQVEEQSMTMSMY. Disordered regions lie at residues 953–985 and 1419–1440; these read EQED…LQPG and HMVI…TLPE. The segment covering 969 to 984 has biased composition (basic and acidic residues); the sequence is ELHESNEHEPGEHLQP. The span at 1428–1437 shows a compositional bias: polar residues; the sequence is TPVKDQQTPT. In terms of domain architecture, PH spans 1542 to 1640; it reads VVARKGYLNV…WLYAINPLLA (99 aa).

It belongs to the TRAFAC class myosin-kinesin ATPase superfamily. Kinesin family. Unc-104 subfamily. As to quaternary structure, monomer.

The protein localises to the cytoplasm. It is found in the cytoskeleton. Required for presynaptic maturation, has a role in axonal transport of dense-core vesicles carrying synaptic vesicle precursors, components required for the morphological transformation of axonal growth cones to mature boutons. In Aedes aegypti (Yellowfever mosquito), this protein is Kinesin-like protein unc-104.